Consider the following 180-residue polypeptide: Large ribosomal subunit protein uL5 (180 aa).

It belongs to the universal ribosomal protein uL5 family. In terms of assembly, part of the 50S ribosomal subunit; part of the 5S rRNA/L5/L18/L25 subcomplex. Contacts the 5S rRNA and the P site tRNA. Forms a bridge to the 30S subunit in the 70S ribosome.

Its function is as follows. This is one of the proteins that bind and probably mediate the attachment of the 5S RNA into the large ribosomal subunit, where it forms part of the central protuberance. In the 70S ribosome it contacts protein S13 of the 30S subunit (bridge B1b), connecting the 2 subunits; this bridge is implicated in subunit movement. Contacts the P site tRNA; the 5S rRNA and some of its associated proteins might help stabilize positioning of ribosome-bound tRNAs. The protein is Large ribosomal subunit protein uL5 of Rippkaea orientalis (strain PCC 8801 / RF-1) (Cyanothece sp. (strain PCC 8801)).